A 576-amino-acid chain; its full sequence is (+)-alpha-terpineol synthase (576 aa).

The (2E)-geranyl diphosphate site is built by Arg286, Asp323, Asp327, Arg466, and Asn469. 2 residues coordinate Mg(2+): Asp323 and Asp327. Positions 323–327 (DDVYD) match the DDXXD motif motif. Asn469, Thr473, and Glu477 together coordinate Mg(2+).

This sequence belongs to the terpene synthase family. Tpsb subfamily. Mg(2+) serves as cofactor. Mn(2+) is required as a cofactor.

It catalyses the reaction (2E)-geranyl diphosphate + H2O = (R)-alpha-terpineol + diphosphate. Monoterpene synthase producing mainly (+)-alpha-terpineol (44%) and (-)-limonene (33.6%) and lower amounts of (E)-geraniol (5.9%), linalool (5.0%), myrcene (3.4%), (-)-alpha-pinene (3.3%), (+)-sabinene (3.0%) and alpha-terpinolene (1.6%). The sequence is that of (+)-alpha-terpineol synthase from Santalum album (White sandalwood).